A 195-amino-acid polypeptide reads, in one-letter code: Imidazoleglycerol-phosphate dehydratase (195 aa).

It belongs to the imidazoleglycerol-phosphate dehydratase family.

The protein resides in the cytoplasm. It catalyses the reaction D-erythro-1-(imidazol-4-yl)glycerol 3-phosphate = 3-(imidazol-4-yl)-2-oxopropyl phosphate + H2O. The protein operates within amino-acid biosynthesis; L-histidine biosynthesis; L-histidine from 5-phospho-alpha-D-ribose 1-diphosphate: step 6/9. The chain is Imidazoleglycerol-phosphate dehydratase from Thermotoga neapolitana (strain ATCC 49049 / DSM 4359 / NBRC 107923 / NS-E).